A 602-amino-acid polypeptide reads, in one-letter code: Aspartate--tRNA(Asp/Asn) ligase (602 aa).

Glutamate 176 contacts L-aspartate. The interval 200-203 is aspartate; sequence QQFK. 2 residues coordinate L-aspartate: arginine 222 and histidine 452. 222 to 224 lines the ATP pocket; it reads RDE. Residue glutamate 490 participates in ATP binding. L-aspartate is bound at residue arginine 497. Residue 542–545 participates in ATP binding; sequence GIDR.

Belongs to the class-II aminoacyl-tRNA synthetase family. Type 1 subfamily. Homodimer.

The protein localises to the cytoplasm. It carries out the reaction tRNA(Asx) + L-aspartate + ATP = L-aspartyl-tRNA(Asx) + AMP + diphosphate. Aspartyl-tRNA synthetase with relaxed tRNA specificity since it is able to aspartylate not only its cognate tRNA(Asp) but also tRNA(Asn). Reaction proceeds in two steps: L-aspartate is first activated by ATP to form Asp-AMP and then transferred to the acceptor end of tRNA(Asp/Asn). The protein is Aspartate--tRNA(Asp/Asn) ligase of Rickettsia canadensis (strain McKiel).